A 301-amino-acid polypeptide reads, in one-letter code: Small ribosomal subunit biogenesis GTPase RsgA (301 aa).

A CP-type G domain is found at 63–224 (INALVRPPIA…IADTPGFSSY (162 aa)). Residues 112–115 (SKAD) and 167–175 (GQTGAGKST) each bind GTP. Residues Cys-248, Cys-253, His-255, and Cys-261 each coordinate Zn(2+).

The protein belongs to the TRAFAC class YlqF/YawG GTPase family. RsgA subfamily. As to quaternary structure, monomer. Associates with 30S ribosomal subunit, binds 16S rRNA. The cofactor is Zn(2+).

The protein localises to the cytoplasm. Functionally, one of several proteins that assist in the late maturation steps of the functional core of the 30S ribosomal subunit. Helps release RbfA from mature subunits. May play a role in the assembly of ribosomal proteins into the subunit. Circularly permuted GTPase that catalyzes slow GTP hydrolysis, GTPase activity is stimulated by the 30S ribosomal subunit. The polypeptide is Small ribosomal subunit biogenesis GTPase RsgA (Leuconostoc citreum (strain KM20)).